We begin with the raw amino-acid sequence, 336 residues long: HTH-type transcriptional repressor PurR (336 aa).

An HTH lacI-type domain is found at 2 to 56 (ATIKDVAKMAGVSTTTVSHVINKTRFVAKDTEEAVLSAIKQLNYSPSAVARSLKV). A DNA-binding region (H-T-H motif) is located at residues 4 to 23 (IKDVAKMAGVSTTTVSHVIN). A DNA-binding region spans residues 48-56 (SAVARSLKV). 5 residues coordinate hypoxanthine: Tyr73, Lys188, Thr190, Phe219, and Asp273.

Homodimer.

The protein operates within purine metabolism; purine nucleotide biosynthesis [regulation]. Its function is as follows. Is the main repressor of the genes involved in the de novo synthesis of purine nucleotides, regulating purB, purC, purEK, purF, purHD, purL, purMN and guaBA expression. PurR is allosterically activated to bind its cognate DNA by binding the purine corepressors, hypoxanthine or guanine, thereby effecting transcription repression. The sequence is that of HTH-type transcriptional repressor PurR from Haemophilus influenzae (strain ATCC 51907 / DSM 11121 / KW20 / Rd).